Here is a 97-residue protein sequence, read N- to C-terminus: Protein MxiI (97 aa).

The protein to S.typhimurium PrgJ.

In terms of biological role, necessary for the secretion of IPA invasins. This Shigella flexneri protein is Protein MxiI (mxiI).